The following is a 257-amino-acid chain: MSILFYVIFLAYLRGIQGNNMDQRSLPEDSLNSLIIKLIQADILKNKLSKQMVDVKENYQSTLPKAEAPREPERGGPAKSAFQPVIAMDTELLRQQRRYNSPRVLLSDSTPLEPPPLYLMEDYVGSPVVANRTSRRKRYAEHKSHRGEYSVCDSESLWVTDKSSAIDIRGHQVTVLGEIKTGNSPVKQYFYETRCKEARPVKNGCRGIDDKHWNSQCKTSQTYVRALTSENNKLVGWRWIRIDTSCVCALSRKIGRT.

The signal sequence occupies residues 1–18; sequence MSILFYVIFLAYLRGIQG. Residues 19-138 constitute a propeptide that is removed on maturation; that stretch reads NNMDQRSLPE…VANRTSRRKR (120 aa). Residues 61–81 are disordered; sequence STLPKAEAPREPERGGPAKSA. Residues 67–76 are compositionally biased toward basic and acidic residues; the sequence is EAPREPERGG. N-linked (GlcNAc...) asparagine glycosylation is present at asparagine 131. 3 cysteine pairs are disulfide-bonded: cysteine 152/cysteine 217, cysteine 195/cysteine 246, and cysteine 205/cysteine 248.

This sequence belongs to the NGF-beta family. In terms of tissue distribution, brain and peripheral tissues.

Its subcellular location is the secreted. In terms of biological role, seems to promote the survival of visceral and proprioceptive sensory neurons. In Homo sapiens (Human), this protein is Neurotrophin-3 (NTF3).